The sequence spans 500 residues: Enolase (500 aa).

Substrate-binding residues include His-225 and Glu-234. The active-site Proton donor is the Glu-277. Positions 312, 361, and 386 each coordinate Mg(2+). Substrate contacts are provided by Glu-361 and Asp-386. Lys-411 functions as the Proton acceptor in the catalytic mechanism. Substrate contacts are provided by residues 438–441 (SHRS) and Lys-462.

Belongs to the enolase family. Homodimer. Requires Mg(2+) as cofactor.

It localises to the cytoplasm. The enzyme catalyses (2R)-2-phosphoglycerate = phosphoenolpyruvate + H2O. The protein operates within carbohydrate degradation; glycolysis; pyruvate from D-glyceraldehyde 3-phosphate: step 4/5. In terms of biological role, enzyme of the glycolytic pathway. Glycolysis is essential in glial cells but not in neurons; neurons rely on the citric acid cycle for their energy needs, and on lactate and alanine secreted into the hemolymph by glial cells to fuel it. In Drosophila melanogaster (Fruit fly), this protein is Enolase.